A 62-amino-acid polypeptide reads, in one-letter code: Toxin Tst2 (62 aa).

One can recognise an LCN-type CS-alpha/beta domain in the interval 1–62; it reads KEGYAMDHEG…KVWDYATNKC (62 aa). Intrachain disulfides connect cysteine 11/cysteine 62, cysteine 15/cysteine 38, cysteine 23/cysteine 43, and cysteine 27/cysteine 45. Residue cysteine 62 is modified to Cysteine amide.

As to expression, expressed by the venom gland.

The protein resides in the secreted. Alpha toxins bind voltage-independently at site-3 of sodium channels (Nav) and inhibit the inactivation of the activated channels, thereby blocking neuronal transmission. Is toxic to mice. In Tityus stigmurus (Brazilian scorpion), this protein is Toxin Tst2.